The following is a 298-amino-acid chain: Ethanolamine ammonia-lyase small subunit (298 aa).

Valine 210, glutamate 231, and cysteine 261 together coordinate adenosylcob(III)alamin.

Belongs to the EutC family. In terms of assembly, the basic unit is a heterodimer which dimerizes to form tetramers. The heterotetramers trimerize; 6 large subunits form a core ring with 6 small subunits projecting outwards. Adenosylcob(III)alamin serves as cofactor.

The protein localises to the bacterial microcompartment. It catalyses the reaction ethanolamine = acetaldehyde + NH4(+). The protein operates within amine and polyamine degradation; ethanolamine degradation. In terms of biological role, catalyzes the deamination of various vicinal amino-alcohols to oxo compounds. Allows this organism to utilize ethanolamine as the sole source of nitrogen and carbon in the presence of external vitamin B12. This Salmonella schwarzengrund (strain CVM19633) protein is Ethanolamine ammonia-lyase small subunit.